Consider the following 431-residue polypeptide: Probable ganciclovir kinase (431 aa).

The Protein kinase domain occupies 79-368; it reads PQEDAVLGSG…KLSIGIDSFG (290 aa). Residues 85 to 93 and Lys103 each bind ATP; that span reads LGSGSFGSV. Residue Asp195 is the Proton acceptor of the active site.

Belongs to the protein kinase superfamily. Tyr protein kinase family. HCMV ganciclovir subfamily.

In terms of biological role, phosphorylates the antiviral nucleoside analog ganciclovir. The chain is Probable ganciclovir kinase (36) from Saimiriine herpesvirus 2 (strain 11) (SaHV-2).